The following is a 214-amino-acid chain: EEF1A lysine methyltransferase 1 (214 aa).

Ser2 bears the N-acetylserine mark. Ser2 bears the Phosphoserine mark.

The protein belongs to the class I-like SAM-binding methyltransferase superfamily. EFM5 family.

It is found in the cytoplasm. The catalysed reaction is L-lysyl-[protein] + 3 S-adenosyl-L-methionine = N(6),N(6),N(6)-trimethyl-L-lysyl-[protein] + 3 S-adenosyl-L-homocysteine + 3 H(+). In terms of biological role, protein N-lysine methyltransferase that selectively catalyzes the trimethylation of EEF1A at 'Lys-79'. This Homo sapiens (Human) protein is EEF1A lysine methyltransferase 1.